The sequence spans 205 residues: Molybdenum cofactor guanylyltransferase (205 aa).

GTP-binding positions include 14 to 16 (LAG), Lys-27, Asp-77, and Asp-107. Asp-107 serves as a coordination point for Mg(2+).

The protein belongs to the MobA family. Monomer. Mg(2+) serves as cofactor.

The protein resides in the cytoplasm. It catalyses the reaction Mo-molybdopterin + GTP + H(+) = Mo-molybdopterin guanine dinucleotide + diphosphate. Functionally, transfers a GMP moiety from GTP to Mo-molybdopterin (Mo-MPT) cofactor (Moco or molybdenum cofactor) to form Mo-molybdopterin guanine dinucleotide (Mo-MGD) cofactor. This Burkholderia cenocepacia (strain HI2424) protein is Molybdenum cofactor guanylyltransferase.